We begin with the raw amino-acid sequence, 126 residues long: Large ribosomal subunit protein bL12 (126 aa).

The span at 36–55 shows a compositional bias: low complexity; that stretch reads APAPAAAPAAGGDQGGAEAA. The disordered stretch occupies residues 36-57; the sequence is APAPAAAPAAGGDQGGAEAAEQ.

The protein belongs to the bacterial ribosomal protein bL12 family. Homodimer. Part of the ribosomal stalk of the 50S ribosomal subunit. Forms a multimeric L10(L12)X complex, where L10 forms an elongated spine to which 2 to 4 L12 dimers bind in a sequential fashion. Binds GTP-bound translation factors.

Functionally, forms part of the ribosomal stalk which helps the ribosome interact with GTP-bound translation factors. Is thus essential for accurate translation. The sequence is that of Large ribosomal subunit protein bL12 from Natranaerobius thermophilus (strain ATCC BAA-1301 / DSM 18059 / JW/NM-WN-LF).